Consider the following 339-residue polypeptide: Dihydroorotate dehydrogenase (quinone) (339 aa).

FMN contacts are provided by residues 64 to 68 (AGADK) and Thr88. Lys68 contributes to the substrate binding site. Substrate is bound at residue 113-117 (NRNGF). Residues Asn141 and Asn174 each contribute to the FMN site. Residue Asn174 participates in substrate binding. The active-site Nucleophile is the Ser177. Asn179 contributes to the substrate binding site. Positions 219 and 247 each coordinate FMN. Substrate is bound at residue 248 to 249 (NT). FMN is bound by residues Gly270, Gly299, and 320 to 321 (YS).

This sequence belongs to the dihydroorotate dehydrogenase family. Type 2 subfamily. In terms of assembly, monomer. The cofactor is FMN.

It is found in the cell membrane. The catalysed reaction is (S)-dihydroorotate + a quinone = orotate + a quinol. Its pathway is pyrimidine metabolism; UMP biosynthesis via de novo pathway; orotate from (S)-dihydroorotate (quinone route): step 1/1. In terms of biological role, catalyzes the conversion of dihydroorotate to orotate with quinone as electron acceptor. In Haemophilus influenzae (strain PittEE), this protein is Dihydroorotate dehydrogenase (quinone).